A 171-amino-acid polypeptide reads, in one-letter code: Adenine phosphoribosyltransferase (171 aa).

The protein belongs to the purine/pyrimidine phosphoribosyltransferase family. As to quaternary structure, homodimer.

The protein localises to the cytoplasm. It carries out the reaction AMP + diphosphate = 5-phospho-alpha-D-ribose 1-diphosphate + adenine. It functions in the pathway purine metabolism; AMP biosynthesis via salvage pathway; AMP from adenine: step 1/1. Functionally, catalyzes a salvage reaction resulting in the formation of AMP, that is energically less costly than de novo synthesis. This chain is Adenine phosphoribosyltransferase, found in Mesomycoplasma hyopneumoniae (strain 232) (Mycoplasma hyopneumoniae).